The following is a 192-amino-acid chain: MYQDLIRNELNEAAETLANFLKDDANIHAIQRAAVLLADSFKAGGKVLSCGNGGSHCDAMHFAEELTGRYRENRPGYPAIAISDVSHISCVGNDFGFNDIFSRYVEAVGREGDVLLGISTSGNSANVIKAIAAAREKGMKVITLTGKDGGKMAGMADIEIRVPHFGYADRIQEIHIKVIHILIQLIEKEMAK.

Residues 37-192 (LADSFKAGGK…IQLIEKEMAK (156 aa)) form the SIS domain. Position 52–54 (52–54 (NGG)) interacts with substrate. 2 residues coordinate Zn(2+): H61 and E65. Substrate is bound by residues E65, 93-94 (ND), 119-121 (STS), S124, and Q172. Residues Q172 and H180 each coordinate Zn(2+).

This sequence belongs to the SIS family. GmhA subfamily. Homotetramer. Zn(2+) is required as a cofactor.

It is found in the cytoplasm. It carries out the reaction 2 D-sedoheptulose 7-phosphate = D-glycero-alpha-D-manno-heptose 7-phosphate + D-glycero-beta-D-manno-heptose 7-phosphate. It participates in carbohydrate biosynthesis; D-glycero-D-manno-heptose 7-phosphate biosynthesis; D-glycero-alpha-D-manno-heptose 7-phosphate and D-glycero-beta-D-manno-heptose 7-phosphate from sedoheptulose 7-phosphate: step 1/1. In terms of biological role, catalyzes the isomerization of sedoheptulose 7-phosphate in D-glycero-D-manno-heptose 7-phosphate. In Escherichia fergusonii (strain ATCC 35469 / DSM 13698 / CCUG 18766 / IAM 14443 / JCM 21226 / LMG 7866 / NBRC 102419 / NCTC 12128 / CDC 0568-73), this protein is Phosphoheptose isomerase.